A 400-amino-acid chain; its full sequence is NAD-dependent protein deacetylase sirtuin-7 (400 aa).

The segment at 1 to 27 (MAAGGLSRSERKAAERVRRLREEQQRE) is disordered. Residues 8–27 (RSERKAAERVRRLREEQQRE) are compositionally biased toward basic and acidic residues. A Deacetylase sirtuin-type domain is found at 82–329 (PEELRGKVRE…RLLMAELGLE (248 aa)). NAD(+) contacts are provided by residues 107 to 126 (GAGI…NGVW) and 167 to 170 (QNCD). His-187 acts as the Proton acceptor in catalysis. Zn(2+) is bound by residues Cys-195, Cys-198, Cys-225, and Cys-228. NAD(+) contacts are provided by residues 268-270 (GSS), 297-299 (NLQ), and Cys-315. The interval 354-380 (SHSRKSLCRSREEAPPGDRGAPLSSAP) is disordered. The residue at position 388 (Arg-388) is an Asymmetric dimethylarginine; alternate. Omega-N-methylarginine; alternate is present on Arg-388.

This sequence belongs to the sirtuin family. Class IV subfamily. In terms of assembly, interacts with UBTF and the RNA polymerase I complex. Interacts with components of the B-WICH complex, such as MYBBP1A, SMARCA5/SNF2H and BAZ1B/WSTF. Interacts with ELK4, leading to stabilization at target promoters for H3K18Ac deacetylation. Interacts with histone H2A and/or histone H2B. Interacts with DNMT1. Interacts with SIRT1. The cofactor is Zn(2+). In terms of processing, phosphorylated during mitosis. Post-translationally, methylation at Arg-388 by PRMT6 inhibits the H3K18Ac histone deacetylase activity, promoting mitochondria biogenesis and maintaining mitochondria respiration. Ubiquitinated via 'Lys-63'-linked ubiquitin chains. Deubiquitinated by USP7, inhibiting the H3K18Ac histone deacetylase activity and regulating gluconeogenesis. Ubiquitinated by E3 ubiquitin-protein ligase complex containing FBXO7; leading to proteasomal degradation.

It is found in the nucleus. It localises to the nucleolus. The protein localises to the nucleoplasm. Its subcellular location is the chromosome. The protein resides in the cytoplasm. It carries out the reaction N(6)-acetyl-L-lysyl-[protein] + NAD(+) + H2O = 2''-O-acetyl-ADP-D-ribose + nicotinamide + L-lysyl-[protein]. The catalysed reaction is N(6)-glutaryl-L-lysyl-[protein] + NAD(+) + H2O = 2''-O-glutaryl-ADP-D-ribose + nicotinamide + L-lysyl-[protein]. It catalyses the reaction N(6)-succinyl-L-lysyl-[protein] + NAD(+) + H2O = 2''-O-succinyl-ADP-D-ribose + nicotinamide + L-lysyl-[protein]. The enzyme catalyses N(6)-propanoyl-L-lysyl-[protein] + NAD(+) + H2O = 3''-O-propanoyl-ADP-D-ribose + nicotinamide + L-lysyl-[protein]. It carries out the reaction N(6)-decanoyl-L-lysyl-[protein] + NAD(+) + H2O = 2''-O-decanoyl-ADP-D-ribose + nicotinamide + L-lysyl-[protein]. NAD-dependent protein-lysine deacetylase and deacylase activities are activated by nucleic acids. Histone deacetylase activity is activated by DNA and nucleosomes. Protein-lysine deacylase activity is activated by RNA. H3K18Ac histone deacetylase activity is inhibited by methylation at Arg-388. H3K18Ac histone deacetylase activity is inhibited by deubiquitination by USP7. NAD-dependent protein-lysine deacylase that can act both as a deacetylase or deacylase (desuccinylase, depropionylase, deglutarylase and dedecanoylase), depending on the context. Specifically mediates deacetylation of histone H3 at 'Lys-18' (H3K18Ac). In contrast to other histone deacetylases, displays strong preference for a specific histone mark, H3K18Ac, directly linked to control of gene expression. H3K18Ac is mainly present around the transcription start site of genes and has been linked to activation of nuclear hormone receptors; SIRT7 thereby acts as a transcription repressor. Moreover, H3K18 hypoacetylation has been reported as a marker of malignancy in various cancers and seems to maintain the transformed phenotype of cancer cells. Also able to mediate deacetylation of histone H3 at 'Lys-36' (H3K36Ac) in the context of nucleosomes. Also mediates deacetylation of non-histone proteins, such as ATM, CDK9, DDX21, DDB1, FBL, FKBP5/FKBP51, GABPB1, RAN, RRP9/U3-55K and POLR1E/PAF53. Enriched in nucleolus where it stimulates transcription activity of the RNA polymerase I complex. Acts by mediating the deacetylation of the RNA polymerase I subunit POLR1E/PAF53, thereby promoting the association of RNA polymerase I with the rDNA promoter region and coding region. In response to metabolic stress, SIRT7 is released from nucleoli leading to hyperacetylation of POLR1E/PAF53 and decreased RNA polymerase I transcription. Required to restore the transcription of ribosomal RNA (rRNA) at the exit from mitosis. Promotes pre-ribosomal RNA (pre-rRNA) cleavage at the 5'-terminal processing site by mediating deacetylation of RRP9/U3-55K, a core subunit of the U3 snoRNP complex. Mediates 'Lys-37' deacetylation of Ran, thereby regulating the nuclear export of NF-kappa-B subunit RELA/p65. Acts as a regulator of DNA damage repair by mediating deacetylation of ATM during the late stages of DNA damage response, promoting ATM dephosphorylation and deactivation. Suppresses the activity of the DCX (DDB1-CUL4-X-box) E3 ubiquitin-protein ligase complexes by mediating deacetylation of DDB1, which prevents the interaction between DDB1 and CUL4 (CUL4A or CUL4B). Activates RNA polymerase II transcription by mediating deacetylation of CDK9, thereby promoting 'Ser-2' phosphorylation of the C-terminal domain (CTD) of RNA polymerase II. Deacetylates FBL, promoting histone-glutamine methyltransferase activity of FBL. Acts as a regulator of mitochondrial function by catalyzing deacetylation of GABPB1. Regulates Akt/AKT1 activity by mediating deacetylation of FKBP5/FKBP51. Required to prevent R-loop-associated DNA damage and transcription-associated genomic instability by mediating deacetylation and subsequent activation of DDX21, thereby overcoming R-loop-mediated stalling of RNA polymerases. In addition to protein deacetylase activity, also acts as a protein-lysine deacylase. Acts as a protein depropionylase by mediating depropionylation of Osterix (SP7), thereby regulating bone formation by osteoblasts. Acts as a histone deglutarylase by mediating deglutarylation of histone H4 on 'Lys-91' (H4K91glu); a mark that destabilizes nucleosomes by promoting dissociation of the H2A-H2B dimers from nucleosomes. Acts as a histone desuccinylase: in response to DNA damage, recruited to DNA double-strand breaks (DSBs) and catalyzes desuccinylation of histone H3 on 'Lys-122' (H3K122succ), thereby promoting chromatin condensation and DSB repair. Also promotes DSB repair by promoting H3K18Ac deacetylation, regulating non-homologous end joining (NHEJ). Along with its role in DNA repair, required for chromosome synapsis during prophase I of female meiosis by catalyzing H3K18Ac deacetylation. Involved in transcriptional repression of LINE-1 retrotransposon via H3K18Ac deacetylation, and promotes their association with the nuclear lamina. Required to stabilize ribosomal DNA (rDNA) heterochromatin and prevent cellular senescence induced by rDNA instability. Acts as a negative regulator of SIRT1 by preventing autodeacetylation of SIRT1, restricting SIRT1 deacetylase activity. In Homo sapiens (Human), this protein is NAD-dependent protein deacetylase sirtuin-7.